Consider the following 256-residue polypeptide: Acetyl-coenzyme A carboxylase carboxyl transferase subunit alpha (256 aa).

A CoA carboxyltransferase C-terminal domain is found at 1–236; that stretch reads MTDVARILKE…KLHLIDEITQ (236 aa).

This sequence belongs to the AccA family. In terms of assembly, acetyl-CoA carboxylase is a heterohexamer composed of biotin carboxyl carrier protein (AccB), biotin carboxylase (AccC) and two subunits each of ACCase subunit alpha (AccA) and ACCase subunit beta (AccD).

It is found in the cytoplasm. The catalysed reaction is N(6)-carboxybiotinyl-L-lysyl-[protein] + acetyl-CoA = N(6)-biotinyl-L-lysyl-[protein] + malonyl-CoA. Its pathway is lipid metabolism; malonyl-CoA biosynthesis; malonyl-CoA from acetyl-CoA: step 1/1. Functionally, component of the acetyl coenzyme A carboxylase (ACC) complex. First, biotin carboxylase catalyzes the carboxylation of biotin on its carrier protein (BCCP) and then the CO(2) group is transferred by the carboxyltransferase to acetyl-CoA to form malonyl-CoA. This is Acetyl-coenzyme A carboxylase carboxyl transferase subunit alpha from Streptococcus equi subsp. zooepidemicus (strain H70).